A 367-amino-acid chain; its full sequence is Leucine-rich repeat-containing protein 28 (367 aa).

9 LRR repeats span residues 16-36, 42-63, 66-87, 89-111, 112-133, 135-156, 158-179, 181-202, and 204-226; these read KHKN…ELLK, YLER…LAQK, NLVE…IGSL, KLQS…GRLK, SLRH…IGKL, ELQT…LYQC, SLQY…LCQL, SLNE…LGRS, and ELQY…LYNK.

The chain is Leucine-rich repeat-containing protein 28 (lrrc28) from Xenopus tropicalis (Western clawed frog).